The sequence spans 827 residues: Discs large homolog 1-like protein (827 aa).

Disordered stretches follow at residues 38–61 (HQDEDTGSPQEPSSPQFTDDTPGP) and 102–133 (SPVVKEESPPSPSTPLSNPYPQSPVSVQANPP). Residues 44–56 (GSPQEPSSPQFTD) show a composition bias toward polar residues. 3 consecutive PDZ domains span residues 159–246 (EITL…RRRK), 254–341 (EIKL…AKPN), and 403–484 (KVVL…QYRP). Positions 518–588 (KRSLYVRALF…PSKRRVEKKE (71 aa)) constitute an SH3 domain. The disordered stretch occupies residues 595–618 (VKFNSKSREKGDNPDDMLSKGQSG). Residues 637–812 (SRPVIILGPM…IYDQVKQIIE (176 aa)) enclose the Guanylate kinase-like domain.

Belongs to the MAGUK family.

The protein resides in the membrane. In terms of biological role, may play a role in synapse assembly and function. This is Discs large homolog 1-like protein (dlg1l) from Danio rerio (Zebrafish).